A 215-amino-acid chain; its full sequence is Ependymin (215 aa).

An N-terminal signal peptide occupies residues 1 to 20 (MHTVKLLCVVFSCLCAVAWA). Residues N71 and N94 are each glycosylated (N-linked (GlcNAc...) asparagine).

Belongs to the ependymin family. In terms of assembly, forms disulfide-linked dimers. In terms of processing, binds calcium through the terminal sialic acids. EPDs are synthesized in the meninx and secreted in the cerebrospinal fluid.

It localises to the secreted. Functionally, may play a role in neural plasticity. May be involved during axon regeneration. The chain is Ependymin (epd) from Cyprinus carpio (Common carp).